Consider the following 158-residue polypeptide: C-type lectin galactose-binding isoform (158 aa).

A signal peptide spans 1-20 (MGRFLLVTLSLLVVAFSLNG). 3 disulfide bridges follow: C26-C37, C54-C154, and C129-C146. Positions 33-155 (KNGYCYKVFK…CTALRPFLCQ (123 aa)) constitute a C-type lectin domain. Ca(2+) is bound by residues Q119, D121, E127, N142, and D143. Residues 119-121 (QPD) carry the Galactose-binding motif.

Belongs to the true venom lectin family. In terms of assembly, homodimer; disulfide-linked. Expressed by the venom gland.

It is found in the secreted. In terms of biological role, galactose-binding lectin that binds to and agglutinates erythrocytes in a calcium-dependent manner. The protein is C-type lectin galactose-binding isoform of Hoplocephalus stephensii (Stephens's banded snake).